The chain runs to 420 residues: Nucleobindin-2 (420 aa).

An N-terminal signal peptide occupies residues 1 to 24; sequence MRWRTILLQYCFLLITCLLTALEA. Residues 171–223 mediate DNA binding; it reads KTRHEEFKKYEMMKEHERREYLKTLNEEKRKEEESKFEEMKKKHENHPKVNHP. Over residues 195-212 the composition is skewed to basic and acidic residues; it reads LNEEKRKEEESKFEEMKK. Residues 195–225 are disordered; that stretch reads LNEEKRKEEESKFEEMKKKHENHPKVNHPGS. The tract at residues 213–420 is binds to necdin; it reads KHENHPKVNH…AGELKFEPHI (208 aa). EF-hand domains are found at residues 241–276 and 293–328; these read PNDF…ELEK and ERLR…KEFL. Ca(2+) is bound by residues D254 and N256. S257 is subject to Phosphoserine. Ca(2+) contacts are provided by D258, E265, D306, N308, D310, and E317. Residues 304 to 334 carry the GBA motif; it reads EVDTNKDRLVTLEEFLKATEKKEFLEPDSWE. At S332 the chain carries Phosphoserine. The tract at residues 398–420 is disordered; that stretch reads QKKLQQGIPPSGPAGELKFEPHI.

This sequence belongs to the nucleobindin family. In terms of assembly, interacts (via GBA motif) with guanine nucleotide-binding protein G(i) alpha subunit GNAI3. Preferentially interacts with inactive rather than active GNAI3. Interaction with GNAI3 is inhibited when NUCB2 binds calcium, probably due to a conformational change which renders the GBA motif inaccessible. Binds to the postmitotic growth suppressor NDN; coexpression abolishes NUCB2 secretion. Interacts with MC4R. As to expression, predominantly expressed in spleen, testis and normal stomach.

The protein localises to the golgi apparatus. The protein resides in the membrane. Its subcellular location is the cytoplasm. It localises to the secreted. It is found in the endoplasmic reticulum. The protein localises to the nucleus envelope. Calcium-binding protein which may have a role in calcium homeostasis. Acts as a non-receptor guanine nucleotide exchange factor which binds to and activates guanine nucleotide-binding protein (G-protein) alpha subunit GNAI3. Functionally, anorexigenic peptide, seems to play an important role in hypothalamic pathways regulating food intake and energy homeostasis, acting in a leptin-independent manner. May also exert hypertensive roles and modulate blood pressure through directly acting on peripheral arterial resistance. In intestinal epithelial cells, plays a role in the inhibition of hepatic glucose production via MC4R receptor leading to increased cyclic adenosine monophosphate (cAMP) levels and glucagon-like peptide 1 (GLP-1) secretion. This chain is Nucleobindin-2, found in Homo sapiens (Human).